The primary structure comprises 673 residues: UvrABC system protein B (673 aa).

One can recognise a Helicase ATP-binding domain in the interval 26-414 (EGLEDGLAHQ…GDEVVDQVVR (389 aa)). 39–46 (GVTGSGKT) is a binding site for ATP. The Beta-hairpin signature appears at 92-115 (YYDYYQPEAYVPSSDTFIEKDASI). One can recognise a Helicase C-terminal domain in the interval 431–597 (QVDDLLSEIR…GLNKKVVDIL (167 aa)). One can recognise a UVR domain in the interval 633–668 (QQKIHELEGQMMQHAQNLEFEEAAQIRDQLHQLREL).

This sequence belongs to the UvrB family. As to quaternary structure, forms a heterotetramer with UvrA during the search for lesions. Interacts with UvrC in an incision complex.

It localises to the cytoplasm. Its function is as follows. The UvrABC repair system catalyzes the recognition and processing of DNA lesions. A damage recognition complex composed of 2 UvrA and 2 UvrB subunits scans DNA for abnormalities. Upon binding of the UvrA(2)B(2) complex to a putative damaged site, the DNA wraps around one UvrB monomer. DNA wrap is dependent on ATP binding by UvrB and probably causes local melting of the DNA helix, facilitating insertion of UvrB beta-hairpin between the DNA strands. Then UvrB probes one DNA strand for the presence of a lesion. If a lesion is found the UvrA subunits dissociate and the UvrB-DNA preincision complex is formed. This complex is subsequently bound by UvrC and the second UvrB is released. If no lesion is found, the DNA wraps around the other UvrB subunit that will check the other stand for damage. This is UvrABC system protein B from Salmonella paratyphi A (strain ATCC 9150 / SARB42).